The following is a 398-amino-acid chain: 8-amino-7-oxononanoate synthase (398 aa).

Arg23 lines the substrate pocket. 110 to 111 serves as a coordination point for pyridoxal 5'-phosphate; that stretch reads GY. His135 is a binding site for substrate. Pyridoxal 5'-phosphate is bound by residues Ser181, His209, and Thr238. At Lys241 the chain carries N6-(pyridoxal phosphate)lysine. A substrate-binding site is contributed by Thr355.

The protein belongs to the class-II pyridoxal-phosphate-dependent aminotransferase family. BioF subfamily. Homodimer. It depends on pyridoxal 5'-phosphate as a cofactor.

The enzyme catalyses 6-carboxyhexanoyl-[ACP] + L-alanine + H(+) = (8S)-8-amino-7-oxononanoate + holo-[ACP] + CO2. It functions in the pathway cofactor biosynthesis; biotin biosynthesis. Catalyzes the decarboxylative condensation of pimeloyl-[acyl-carrier protein] and L-alanine to produce 8-amino-7-oxononanoate (AON), [acyl-carrier protein], and carbon dioxide. The chain is 8-amino-7-oxononanoate synthase from Cellvibrio japonicus (strain Ueda107) (Pseudomonas fluorescens subsp. cellulosa).